We begin with the raw amino-acid sequence, 212 residues long: Large ribosomal subunit protein uL4 (212 aa).

A compositionally biased stretch (polar residues) spans 43 to 52 (NNRQGTASTK). The interval 43 to 77 (NNRQGTASTKTRSEVRGGGRKPWRQKGTGRARAGS) is disordered. Residues 60-71 (GGRKPWRQKGTG) show a composition bias toward basic residues.

This sequence belongs to the universal ribosomal protein uL4 family. As to quaternary structure, part of the 50S ribosomal subunit.

One of the primary rRNA binding proteins, this protein initially binds near the 5'-end of the 23S rRNA. It is important during the early stages of 50S assembly. It makes multiple contacts with different domains of the 23S rRNA in the assembled 50S subunit and ribosome. Its function is as follows. Forms part of the polypeptide exit tunnel. In Trichodesmium erythraeum (strain IMS101), this protein is Large ribosomal subunit protein uL4.